We begin with the raw amino-acid sequence, 233 residues long: Phosphatidylserine decarboxylase proenzyme (233 aa).

Serine 190 functions as the Schiff-base intermediate with substrate; via pyruvic acid in the catalytic mechanism. Serine 190 is subject to Pyruvic acid (Ser); by autocatalysis.

The protein belongs to the phosphatidylserine decarboxylase family. PSD-A subfamily. As to quaternary structure, heterodimer of a large membrane-associated beta subunit and a small pyruvoyl-containing alpha subunit. Pyruvate is required as a cofactor. Post-translationally, is synthesized initially as an inactive proenzyme. Formation of the active enzyme involves a self-maturation process in which the active site pyruvoyl group is generated from an internal serine residue via an autocatalytic post-translational modification. Two non-identical subunits are generated from the proenzyme in this reaction, and the pyruvate is formed at the N-terminus of the alpha chain, which is derived from the carboxyl end of the proenzyme. The post-translation cleavage follows an unusual pathway, termed non-hydrolytic serinolysis, in which the side chain hydroxyl group of the serine supplies its oxygen atom to form the C-terminus of the beta chain, while the remainder of the serine residue undergoes an oxidative deamination to produce ammonia and the pyruvoyl prosthetic group on the alpha chain.

It localises to the cell membrane. It catalyses the reaction a 1,2-diacyl-sn-glycero-3-phospho-L-serine + H(+) = a 1,2-diacyl-sn-glycero-3-phosphoethanolamine + CO2. The protein operates within phospholipid metabolism; phosphatidylethanolamine biosynthesis; phosphatidylethanolamine from CDP-diacylglycerol: step 2/2. Its function is as follows. Catalyzes the formation of phosphatidylethanolamine (PtdEtn) from phosphatidylserine (PtdSer). The protein is Phosphatidylserine decarboxylase proenzyme of Bartonella quintana (strain Toulouse) (Rochalimaea quintana).